A 238-amino-acid chain; its full sequence is Probable transcriptional regulatory protein MGAS2096_Spy0287 (238 aa).

Belongs to the TACO1 family. YeeN subfamily.

The protein resides in the cytoplasm. The protein is Probable transcriptional regulatory protein MGAS2096_Spy0287 of Streptococcus pyogenes serotype M12 (strain MGAS2096).